Consider the following 178-residue polypeptide: MAILDILVYPDPRLREVAAPVAQVDDDIRRLADDMLETMYDAQGIGLAATQVGVNQRVVVMDLAEEGARQPLVLINPEILDREGAATGQEGCLSIPGFYEDVERAERIRFRALDREGRPWEQEAEGLMAVCVQHEIDHLDGKLFVDYLSELKRKRIRRKLEKLVRQGRVNVGGQTGRA.

Fe cation is bound by residues C92 and H134. E135 is a catalytic residue. H138 is a Fe cation binding site.

The protein belongs to the polypeptide deformylase family. It depends on Fe(2+) as a cofactor.

It catalyses the reaction N-terminal N-formyl-L-methionyl-[peptide] + H2O = N-terminal L-methionyl-[peptide] + formate. Functionally, removes the formyl group from the N-terminal Met of newly synthesized proteins. Requires at least a dipeptide for an efficient rate of reaction. N-terminal L-methionine is a prerequisite for activity but the enzyme has broad specificity at other positions. The polypeptide is Peptide deformylase (Alkalilimnicola ehrlichii (strain ATCC BAA-1101 / DSM 17681 / MLHE-1)).